Here is a 405-residue protein sequence, read N- to C-terminus: L-rhamnonate dehydratase (405 aa).

Substrate is bound by residues His-33 and Arg-59. Mg(2+) contacts are provided by Asp-226, Glu-252, and Glu-280. The Proton acceptor role is filled by His-329. Glu-349 is a substrate binding site.

This sequence belongs to the mandelate racemase/muconate lactonizing enzyme family. RhamD subfamily. As to quaternary structure, homooctamer; tetramer of dimers. Mg(2+) is required as a cofactor.

It carries out the reaction L-rhamnonate = 2-dehydro-3-deoxy-L-rhamnonate + H2O. Functionally, catalyzes the dehydration of L-rhamnonate to 2-keto-3-deoxy-L-rhamnonate (KDR). The chain is L-rhamnonate dehydratase from Escherichia coli (strain SMS-3-5 / SECEC).